A 354-amino-acid polypeptide reads, in one-letter code: Peroxisomal membrane protein PEX32 (354 aa).

Helical transmembrane passes span 24 to 44 (LLNM…VIFL), 63 to 83 (FIAI…ACTV), 84 to 104 (LPTI…TTID), 151 to 171 (GFSL…IFTV), and 173 to 193 (SFLL…SVAT). N319 is a glycosylation site (N-linked (GlcNAc...) asparagine).

It belongs to the PEX28-32 family. PEX30/31 subfamily.

Its subcellular location is the peroxisome membrane. It localises to the endoplasmic reticulum membrane. With PEX24, contributes to tethering of peroxisomes to the endoplasmic reticulum for organelle biogenesis, positioning and segregation. This is Peroxisomal membrane protein PEX32 from Ogataea parapolymorpha (strain ATCC 26012 / BCRC 20466 / JCM 22074 / NRRL Y-7560 / DL-1) (Yeast).